Reading from the N-terminus, the 466-residue chain is Asparagine--tRNA ligase (466 aa).

It belongs to the class-II aminoacyl-tRNA synthetase family. In terms of assembly, homodimer.

The protein localises to the cytoplasm. The enzyme catalyses tRNA(Asn) + L-asparagine + ATP = L-asparaginyl-tRNA(Asn) + AMP + diphosphate + H(+). The chain is Asparagine--tRNA ligase from Shewanella sp. (strain MR-7).